A 1240-amino-acid polypeptide reads, in one-letter code: Protein MMS22-like (1240 aa).

Positions 1–11 are enriched in polar residues; sequence MESEFSQSLTP. Residues 1–26 form a disordered region; the sequence is MESEFSQSLTPPVSPSALNHYGESAP.

This sequence belongs to the MMS22 family. MMS22L subfamily. In terms of assembly, component of the MMS22L-TONSL complex.

The protein localises to the nucleus. The protein resides in the chromosome. In terms of biological role, component of the MMS22L-TONSL complex, a complex that promotes homologous recombination-mediated repair of double-strand breaks (DSBs) at stalled or collapsed replication forks. The MMS22L-TONSL complex is required to maintain genome integrity during DNA replication. It mediates the assembly of RAD51 filaments on single-stranded DNA (ssDNA): the MMS22L-TONSL complex is recruited to DSBs following histone replacement by histone chaperones and eviction of the replication protein A complex (RPA/RP-A) from DSBs. Following recruitment to DSBs, the TONSL-MMS22L complex promotes recruitment of RAD51 filaments and subsequent homologous recombination. Within the complex, MMS22L acts by binding ssDNA. The chain is Protein MMS22-like (mms22l) from Danio rerio (Zebrafish).